Here is a 148-residue protein sequence, read N- to C-terminus: Thioredoxin H8 (148 aa).

Positions 1–145 (MGANVSTPDQ…LERKLNKYTQ (145 aa)) constitute a Thioredoxin domain. Catalysis depends on nucleophile residues cysteine 71 and cysteine 74. Residues cysteine 71 and cysteine 74 are joined by a disulfide bond.

The protein belongs to the thioredoxin family. Plant H-type subfamily.

Its subcellular location is the cytoplasm. Functionally, probable thiol-disulfide oxidoreductase that may be involved in the redox regulation of a number of cytosolic enzymes. The polypeptide is Thioredoxin H8 (TRX8) (Arabidopsis thaliana (Mouse-ear cress)).